Here is a 344-residue protein sequence, read N- to C-terminus: Short chain dehydrogenase/reductase mfmJ (344 aa).

NADP(+)-binding residues include L51, K76, D99, N126, Y213, and K217. Catalysis depends on Y213, which acts as the Proton donor. K217 acts as the Lowers pKa of active site Tyr in catalysis.

This sequence belongs to the short-chain dehydrogenases/reductases (SDR) family.

In terms of biological role, short chain dehydrogenase/reductase; part of the gene cluster that mediates the biosynthesis of the phthalide-terpenoid hybrid 11'-O-desmethylfendlerol. MfmJ seems not to be involved directly in the biosynthesis of 11'-O-desmethylfendlerol and its role has still to be determined. The biosynthesis of 11'-O-desmethylfendlerol begins with the NR-PKS mfmB that forms 3,5-dimethylorsellinic acid (DMOA), which is then transformed into the phthalide 5,7-dihydroxy-4-(hydroxymethyl)-6-methylphthalide by the cytochrome P450 monooxygenase mfmA and the hydrolase mfmC. Subsequently, the methyltransferase mfmE catalyzes 7-O-methylation to yield 5-hydroxy-4-(hydroxymethyl)-7-methoxy-6-methylphthalide, which undergoes C-3 hydroxylation by the cytochrome P450 monooxygenase mfmF. The resultant cyclopolic acid (2,5-dihydroxy-4-(hydroxymethyl)-7-methoxy-6-methylphthalide) is then farnesylated by the DMATS-type prenyltransferase mfmD to afford 5-O-farnesylcyclopolic acid. Finally, the Pyr4-family terpene cyclase mfmH cyclizes the farnesyl moiety of 5-O-farnesylcyclopolic acid into a drimane-like structure, thus completing the biosynthesis of 11'-O-desmethylfendlerol. This chain is Short chain dehydrogenase/reductase mfmJ, found in Annulohypoxylon moriforme (Filamentous fungus).